Here is a 314-residue protein sequence, read N- to C-terminus: tRNA-cytidine(32) 2-sulfurtransferase (314 aa).

The PP-loop motif motif lies at 49–54 (SGGKDS). 3 residues coordinate [4Fe-4S] cluster: Cys124, Cys127, and Cys215.

The protein belongs to the TtcA family. Homodimer. Requires Mg(2+) as cofactor. It depends on [4Fe-4S] cluster as a cofactor.

It localises to the cytoplasm. The enzyme catalyses cytidine(32) in tRNA + S-sulfanyl-L-cysteinyl-[cysteine desulfurase] + AH2 + ATP = 2-thiocytidine(32) in tRNA + L-cysteinyl-[cysteine desulfurase] + A + AMP + diphosphate + H(+). The protein operates within tRNA modification. Its function is as follows. Catalyzes the ATP-dependent 2-thiolation of cytidine in position 32 of tRNA, to form 2-thiocytidine (s(2)C32). The sulfur atoms are provided by the cysteine/cysteine desulfurase (IscS) system. The sequence is that of tRNA-cytidine(32) 2-sulfurtransferase from Histophilus somni (strain 129Pt) (Haemophilus somnus).